Here is a 172-residue protein sequence, read N- to C-terminus: Small ribosomal subunit protein uS5 (172 aa).

The 64-residue stretch at 17–80 folds into the S5 DRBM domain; the sequence is MREKMIAVNR…EEARRKMIKV (64 aa).

Belongs to the universal ribosomal protein uS5 family. Part of the 30S ribosomal subunit. Contacts proteins S4 and S8.

Functionally, with S4 and S12 plays an important role in translational accuracy. In terms of biological role, located at the back of the 30S subunit body where it stabilizes the conformation of the head with respect to the body. This Janthinobacterium sp. (strain Marseille) (Minibacterium massiliensis) protein is Small ribosomal subunit protein uS5.